A 367-amino-acid polypeptide reads, in one-letter code: Cytochrome b (367 aa).

The next 4 membrane-spanning stretches (helical) occupy residues 20–40 (MGSI…LLSM), 64–85 (WFLR…YAHI), 101–121 (WMVG…GYVL), and 166–186 (FFSL…LHII). H70 and H84 together coordinate heme b. Residues H170 and H184 each coordinate heme b. A ubiquinone is bound at residue H189. Helical transmembrane passes span 214-234 (IKDS…TFFS), 276-296 (LGGV…PLSS), 308-328 (IYQV…WLGA), and 335-355 (YLSL…LLGM).

It belongs to the cytochrome b family. In terms of assembly, the main subunits of complex b-c1 are: cytochrome b, cytochrome c1 and the Rieske protein. Heme b serves as cofactor.

Its subcellular location is the mitochondrion inner membrane. Functionally, component of the ubiquinol-cytochrome c reductase complex (complex III or cytochrome b-c1 complex) that is part of the mitochondrial respiratory chain. The b-c1 complex mediates electron transfer from ubiquinol to cytochrome c. Contributes to the generation of a proton gradient across the mitochondrial membrane that is then used for ATP synthesis. The chain is Cytochrome b (MT-CYB) from Albinaria caerulea (Land snail).